The primary structure comprises 564 residues: MRSDEIKKGFQRAPHRSLLRATGLKDEDFEKPFIGVANSFIEIIPGHFFLNKYAAIIKDEIRKCGCVPFEFNTIGVDDGIAMGHDGMLYSLPSREIIANSIETVMNAHKLDALICIPNCDKITPGMIMGALRVNVPTIFVSGGPMKAGKLSDGTPIDLATAFEAVGKVAKGEMSEEELYQIECEACPSGGSCSGMFTANSMNTLMEAMGIALKGNGTILALTPEREELLRKAARRICEIAKDEKLTQEYKIRNILNEKAIHNAFVVDMAMGGSTNTVLHMMAISKEAGVDFPLSKLNEISKHVAHIAKISPSLQTVHMEDINKAGGVSAVMKEASKRSDTVLYLDNPVIEGGTIGDRIKDAEVIDTSIIHPIDKPYSEVGGLAILFGNLAEEGAVVKTAGIDPNMREFTGKAICFDSQQEAIDGILGGKVKPGHVVVIRYEGPKGGPGMQEMLAPTSLIAGMNLGDKVALITDGRFSGATRGASIGHVSPEAAEGGVIGLLQDGDEIYINVDTYTLEVKLSDEELEERRKNFKPKVKDIKGRWLRQYRSLVTNAANGAVLKDEC.

Asp78 contacts Mg(2+). Cys119 is a binding site for [2Fe-2S] cluster. Mg(2+) contacts are provided by Asp120 and Lys121. Lys121 carries the N6-carboxylysine modification. Cys192 contributes to the [2Fe-2S] cluster binding site. A Mg(2+)-binding site is contributed by Glu451. Residue Ser477 is the Proton acceptor of the active site.

It belongs to the IlvD/Edd family. In terms of assembly, homodimer. The cofactor is [2Fe-2S] cluster. Requires Mg(2+) as cofactor.

The catalysed reaction is (2R)-2,3-dihydroxy-3-methylbutanoate = 3-methyl-2-oxobutanoate + H2O. It catalyses the reaction (2R,3R)-2,3-dihydroxy-3-methylpentanoate = (S)-3-methyl-2-oxopentanoate + H2O. The protein operates within amino-acid biosynthesis; L-isoleucine biosynthesis; L-isoleucine from 2-oxobutanoate: step 3/4. Its pathway is amino-acid biosynthesis; L-valine biosynthesis; L-valine from pyruvate: step 3/4. Its function is as follows. Functions in the biosynthesis of branched-chain amino acids. Catalyzes the dehydration of (2R,3R)-2,3-dihydroxy-3-methylpentanoate (2,3-dihydroxy-3-methylvalerate) into 2-oxo-3-methylpentanoate (2-oxo-3-methylvalerate) and of (2R)-2,3-dihydroxy-3-methylbutanoate (2,3-dihydroxyisovalerate) into 2-oxo-3-methylbutanoate (2-oxoisovalerate), the penultimate precursor to L-isoleucine and L-valine, respectively. The protein is Dihydroxy-acid dehydratase of Nitratiruptor sp. (strain SB155-2).